The primary structure comprises 382 residues: D-galactonate dehydratase (382 aa).

Aspartate 183 is a Mg(2+) binding site. The Proton donor role is filled by histidine 185. Residues glutamate 209 and glutamate 235 each coordinate Mg(2+). The active-site Proton acceptor is the histidine 285.

It belongs to the mandelate racemase/muconate lactonizing enzyme family. GalD subfamily. Requires Mg(2+) as cofactor.

The enzyme catalyses D-galactonate = 2-dehydro-3-deoxy-D-galactonate + H2O. It functions in the pathway carbohydrate acid metabolism; D-galactonate degradation; D-glyceraldehyde 3-phosphate and pyruvate from D-galactonate: step 1/3. Its function is as follows. Catalyzes the dehydration of D-galactonate to 2-keto-3-deoxy-D-galactonate. This chain is D-galactonate dehydratase, found in Salmonella dublin (strain CT_02021853).